A 158-amino-acid chain; its full sequence is Transcription elongation factor GreA (158 aa).

The protein belongs to the GreA/GreB family.

Necessary for efficient RNA polymerase transcription elongation past template-encoded arresting sites. The arresting sites in DNA have the property of trapping a certain fraction of elongating RNA polymerases that pass through, resulting in locked ternary complexes. Cleavage of the nascent transcript by cleavage factors such as GreA or GreB allows the resumption of elongation from the new 3'terminus. GreA releases sequences of 2 to 3 nucleotides. In Rhizobium etli (strain CIAT 652), this protein is Transcription elongation factor GreA.